Consider the following 345-residue polypeptide: MRRFFYTHSRGVTEVVVGRGIPYDKYVERPVVLIEEGLENPLPNAPALALKGGEGVKSLEALSKVYVFLQEAEADRGSTLVAVGGGALLDLATFAAGTYMRGIGLVQVPTTLLAMVDAALGGKGAVDWGLVKNLVGVFYQPKAILCDLEWLRSLPPRVYRSAFAEVVKYGLALDEEFYSWLRQSTTALLNRGEDALEEAVYRSLKLKASVVEADEFEERGIRQVLNVGHTVGHALERVLGLLHGEAVSLGIAAELRLSAELGYLREKYVEETKSLLKAFELPTEAGLSSEQLAAAKGLIKYDKKRRRDYVYLPLVIRPGKWILERLRVEEVARAVEYVVPQGRTA.

Residues 86–90 (GALLD), 110–111 (TT), Lys-123, and Lys-132 contribute to the NAD(+) site. Zn(2+) is bound by residues Glu-165, His-229, and His-243.

It belongs to the sugar phosphate cyclases superfamily. Dehydroquinate synthase family. NAD(+) is required as a cofactor. The cofactor is Co(2+). It depends on Zn(2+) as a cofactor.

It localises to the cytoplasm. The enzyme catalyses 7-phospho-2-dehydro-3-deoxy-D-arabino-heptonate = 3-dehydroquinate + phosphate. It functions in the pathway metabolic intermediate biosynthesis; chorismate biosynthesis; chorismate from D-erythrose 4-phosphate and phosphoenolpyruvate: step 2/7. Functionally, catalyzes the conversion of 3-deoxy-D-arabino-heptulosonate 7-phosphate (DAHP) to dehydroquinate (DHQ). This is 3-dehydroquinate synthase from Pyrobaculum aerophilum (strain ATCC 51768 / DSM 7523 / JCM 9630 / CIP 104966 / NBRC 100827 / IM2).